Consider the following 114-residue polypeptide: Photosystem II reaction center Psb28 protein (114 aa).

The protein belongs to the Psb28 family. In terms of assembly, part of the photosystem II complex.

The protein resides in the plastid. Its subcellular location is the chloroplast thylakoid membrane. The sequence is that of Photosystem II reaction center Psb28 protein from Gracilaria tenuistipitata var. liui (Red alga).